Here is a 344-residue protein sequence, read N- to C-terminus: uncharacterized protein (344 aa).

5 helical membrane passes run 53–73 (FVVGLLLSFILGNVLWGVSVW), 84–104 (WPILPTAFSLHFLFYGLGYNI), 153–173 (IYPLFHYFYIHIFQVLHLYLL), 189–209 (FGAWDWIALELFMFMFVLEML), and 275–295 (IASESLLNWTIFAWLGLVGVF).

Belongs to the steroid 5-alpha reductase family.

The protein resides in the endoplasmic reticulum membrane. This is an uncharacterized protein from Schizosaccharomyces pombe (strain 972 / ATCC 24843) (Fission yeast).